The following is an 853-amino-acid chain: MKLFDKNERVLKRYWKRVKKINEINLSNVPFSELILNMEKIKNNITGENIDDYLVDVFAIVREIAKRTIGLRPFDVQLIGGMVLHEGKVAEMKTGEGKTLVATMPIVLNALLKKGVHLVTVNDYLAKRDAMWMGPIYLALGLRVAVINTQNKSYEVVWKNKELFEKAIRENLSVWPEGFAEEFLPDDKKVNTDCFDVELKEITRKEAYECDITYGTNTEFGFDYLRDNLVINLDSRVQRGHFFAIVDEVDSILIDEARTPLVISGPSKTKASDYRRFNQVAKRLKKDVHFTVDEKKKTVVLTDEGIEYVEKLLNIENLYDPEHVNKMYFLLNALKAHHLFKKDVDYIVNNGEVIIVDEFTGRLLPGRRYSGGLHQAIEAKEGVPIKEESLTYATITYQNYFRMYKKLAGMTGTAKTEEEEFKQIYGMEVVVIPTHKPMIRKDRDDLIYRTEEEKFQAVVSEIKKRHEKGQPVLVGTTSIEKSERLSQMLKKENIPHNVLNAKYHEKEAEIVARAGQRGAVTIATNMAGRGTDIKLGPGVKELGGLLIIGTERHESRRIDNQLRGRAGRQGDPGESIFFLSLEDDIIRIFGGEKLEKIMNLVKIEKGEPIYHPMLTKLIERVQKKVESINFAIRKNLLQMDTVLDAQRKAIYSYREYLLSGNLDEHFYDAMEDFIERILEEFCEKEVCDTQKINESLKILNIDEKLPDTREETKKYLKDIILKRYNKKKEELGEDFSKIGKYIALRVLDENWRQYLEEVEHVKEAVSLRAYGQKDPIIEFKKETFRMFDEMMARIYEQSIVYTLNIRKITDEAEKESKKELEKLYVQHDEFSLVNRKERRTAEKKGKKRLKVKR.

ATP-binding positions include Gln77, 95-99 (GEGKT), and Asp532.

This sequence belongs to the SecA family. In terms of assembly, monomer and homodimer. Part of the essential Sec protein translocation apparatus which comprises SecA, SecYEG and auxiliary proteins SecDF. Other proteins may also be involved.

Its subcellular location is the cell inner membrane. It localises to the cytoplasm. The catalysed reaction is ATP + H2O + cellular proteinSide 1 = ADP + phosphate + cellular proteinSide 2.. Functionally, part of the Sec protein translocase complex. Interacts with the SecYEG preprotein conducting channel. Has a central role in coupling the hydrolysis of ATP to the transfer of proteins into and across the cell membrane, serving as an ATP-driven molecular motor driving the stepwise translocation of polypeptide chains across the membrane. The protein is Protein translocase subunit SecA of Thermosipho melanesiensis (strain DSM 12029 / CIP 104789 / BI429).